The primary structure comprises 380 residues: Anhydro-N-acetylmuramic acid kinase (380 aa).

Gly-9 to Asp-16 is a binding site for ATP.

Belongs to the anhydro-N-acetylmuramic acid kinase family.

The catalysed reaction is 1,6-anhydro-N-acetyl-beta-muramate + ATP + H2O = N-acetyl-D-muramate 6-phosphate + ADP + H(+). It participates in amino-sugar metabolism; 1,6-anhydro-N-acetylmuramate degradation. It functions in the pathway cell wall biogenesis; peptidoglycan recycling. In terms of biological role, catalyzes the specific phosphorylation of 1,6-anhydro-N-acetylmuramic acid (anhMurNAc) with the simultaneous cleavage of the 1,6-anhydro ring, generating MurNAc-6-P. Is required for the utilization of anhMurNAc either imported from the medium or derived from its own cell wall murein, and thus plays a role in cell wall recycling. This is Anhydro-N-acetylmuramic acid kinase from Cyanothece sp. (strain PCC 7425 / ATCC 29141).